The chain runs to 313 residues: Protein FixB (313 aa).

Position 255 to 283 (255 to 283) interacts with FAD; that stretch reads LYLAVGISGQIQHMVGANASQTIFAINKD.

The protein belongs to the ETF alpha-subunit/FixB family. Heterodimer of FixA and FixB.

It functions in the pathway amine and polyamine metabolism; carnitine metabolism. In terms of biological role, required for anaerobic carnitine reduction. May bring reductant to CaiA. The polypeptide is Protein FixB (Escherichia coli O6:K15:H31 (strain 536 / UPEC)).